The chain runs to 365 residues: MQKNYLELIKKVRERSNPDLVQMTKMYSETLSGSKLFENKSIEYSDVSIYIKESMKGVAPSYTMNSKVAANKVEAHLKKSHGNLVDFERQGSVMTNTHILKENDVDLVQITNKSSEFDHKGLEKALNNTSVLKTEEILNLKKHKENFSPYQGNQIDDLKYVRLKSELVLSSTYKTVDIEKENSIYVKVTEPERDIDVVTATYYKSVDFMKTNDKSRKGIQIYNKKTGKINDVDYPFLSIERINVKDIISNRRLKNMIRFLKNIKYDCPHIENKGSIRSFHINAICYNIDVKKYEDLHYLDLVSILYQELTNIISNKSYRDNIKSVDGCEYIFEFDCAKKLIEIEFLSQELDSIIADLHNQSLLVG.

The protein belongs to the CD-NTase family. E subfamily.

It catalyses the reaction 2 GTP = 3',3'-c-di-GMP + 2 diphosphate. Functionally, cyclic nucleotide synthase (second messenger synthase) of a CBASS antivirus system. CBASS (cyclic oligonucleotide-based antiphage signaling system) provides immunity against bacteriophage. The CD-NTase protein synthesizes cyclic nucleotides in response to infection; these serve as specific second messenger signals. The signals activate a diverse range of effectors, leading to bacterial cell death and thus abortive phage infection. A type I-D(GG) CBASS system. In terms of biological role, cyclic dinucleotide synthase that catalyzes the synthesis of c-di-GMP, has no activity with other NTP substrates. In Flavobacteriaceae sp. genome_bin_11, this protein is c-di-GMP synthase.